Reading from the N-terminus, the 388-residue chain is 1D-myo-inositol 2-acetamido-2-deoxy-alpha-D-glucopyranoside deacetylase (388 aa).

Zn(2+)-binding residues include His-6, Asp-9, and His-144. Residues 369–388 (LDQADEGAAHDTSEQSGQRR) are disordered.

It belongs to the MshB deacetylase family. Zn(2+) serves as cofactor.

It carries out the reaction 1D-myo-inositol 2-acetamido-2-deoxy-alpha-D-glucopyranoside + H2O = 1D-myo-inositol 2-amino-2-deoxy-alpha-D-glucopyranoside + acetate. Catalyzes the deacetylation of 1D-myo-inositol 2-acetamido-2-deoxy-alpha-D-glucopyranoside (GlcNAc-Ins) in the mycothiol biosynthesis pathway. In Corynebacterium kroppenstedtii (strain DSM 44385 / JCM 11950 / CIP 105744 / CCUG 35717), this protein is 1D-myo-inositol 2-acetamido-2-deoxy-alpha-D-glucopyranoside deacetylase.